A 407-amino-acid chain; its full sequence is Serpin-Z2 (407 aa).

The disordered stretch occupies residues 1–28 (MDSKRKNQELSTSETADPSLSKTNKKQK). A compositionally biased stretch (polar residues) spans 9–22 (ELSTSETADPSLSK). Residues 344 to 368 (GTEAAAATTVVVVTGSCLWEPKKKI) form an RCL region.

It belongs to the serpin family.

In terms of biological role, probable serine protease inhibitor. The chain is Serpin-Z2 from Arabidopsis thaliana (Mouse-ear cress).